Consider the following 176-residue polypeptide: Adenine phosphoribosyltransferase (176 aa).

The protein belongs to the purine/pyrimidine phosphoribosyltransferase family. In terms of assembly, homodimer.

It localises to the cytoplasm. The catalysed reaction is AMP + diphosphate = 5-phospho-alpha-D-ribose 1-diphosphate + adenine. The protein operates within purine metabolism; AMP biosynthesis via salvage pathway; AMP from adenine: step 1/1. Functionally, catalyzes a salvage reaction resulting in the formation of AMP, that is energically less costly than de novo synthesis. The sequence is that of Adenine phosphoribosyltransferase from Methylobacillus flagellatus (strain ATCC 51484 / DSM 6875 / VKM B-1610 / KT).